The primary structure comprises 466 residues: Heat stress transcription factor A-5 (466 aa).

A DNA-binding region spans residues 21-115 (PAPFLVKTYE…LLKNIHRRKP (95 aa)). Positions 125-191 (SSTDQERAVL…KLLNFLETAI (67 aa)) are hydrophobic repeat HR-A/B. The Bipartite nuclear localization signal motif lies at 198-217 (KNFGKKVEQLDISAYNKKRR). Disordered regions lie at residues 215-248 (KRRL…GNIF), 272-300 (HSIQ…LTKR), and 422-466 (TERP…QLTL). The span at 218 to 233 (LPEVEQSKPPSEDSHL) shows a compositional bias: basic and acidic residues. An AHA motif is present at residues 414–423 (DVFWEQFLTE). Polar residues-rich tracts occupy residues 425 to 438 (PGSS…STYR) and 455 to 466 (LRNTKNIEQLTL). Positions 461-466 (IEQLTL) match the Nuclear export signal motif.

Belongs to the HSF family. Class A subfamily. As to quaternary structure, homotrimer. Post-translationally, exhibits temperature-dependent phosphorylation.

The protein resides in the cytoplasm. Its subcellular location is the nucleus. Functionally, transcriptional activator that specifically binds DNA sequence 5'-AGAAnnTTCT-3' known as heat shock promoter elements (HSE). This chain is Heat stress transcription factor A-5 (HSFA5), found in Arabidopsis thaliana (Mouse-ear cress).